A 151-amino-acid polypeptide reads, in one-letter code: UPF0208 membrane protein YPDSF_1972 (151 aa).

The next 2 helical transmembrane spans lie at 46 to 66 (FGIR…IALG) and 69 to 89 (LGPA…GLWW).

It belongs to the UPF0208 family.

The protein localises to the cell inner membrane. The sequence is that of UPF0208 membrane protein YPDSF_1972 from Yersinia pestis (strain Pestoides F).